We begin with the raw amino-acid sequence, 623 residues long: Glutathione import ATP-binding protein GsiA (623 aa).

2 consecutive ABC transporter domains span residues 15-269 (VENL…RALL) and 314-564 (LRVR…RKLL). ATP is bound by residues 49–56 (GESGSGKS) and 357–364 (GESGSGKS).

It belongs to the ABC transporter superfamily. Glutathione importer (TC 3.A.1.5.11) family. The complex is composed of two ATP-binding proteins (GsiA), two transmembrane proteins (GsiC and GsiD) and a solute-binding protein (GsiB).

Its subcellular location is the cell inner membrane. The enzyme catalyses glutathione(out) + ATP + H2O = glutathione(in) + ADP + phosphate + H(+). In terms of biological role, part of the ABC transporter complex GsiABCD involved in glutathione import. Responsible for energy coupling to the transport system. This Escherichia coli O6:H1 (strain CFT073 / ATCC 700928 / UPEC) protein is Glutathione import ATP-binding protein GsiA.